The chain runs to 340 residues: Methionine import ATP-binding protein MetN 2 (340 aa).

Residues 5-244 (VRFESVTKTF…PQAPASKSFV (240 aa)) enclose the ABC transporter domain. Residue 41 to 48 (GYSGAGKS) participates in ATP binding.

Belongs to the ABC transporter superfamily. Methionine importer (TC 3.A.1.24) family. In terms of assembly, the complex is composed of two ATP-binding proteins (MetN), two transmembrane proteins (MetI) and a solute-binding protein (MetQ).

It localises to the cell membrane. It carries out the reaction L-methionine(out) + ATP + H2O = L-methionine(in) + ADP + phosphate + H(+). The catalysed reaction is D-methionine(out) + ATP + H2O = D-methionine(in) + ADP + phosphate + H(+). Functionally, part of the ABC transporter complex MetNIQ involved in methionine import. Responsible for energy coupling to the transport system. This Rhodococcus jostii (strain RHA1) protein is Methionine import ATP-binding protein MetN 2.